The primary structure comprises 157 residues: Oocyte zinc finger protein XlCOF2 (157 aa).

C2H2-type zinc fingers lie at residues 6 to 28, 34 to 56, 79 to 101, 107 to 129, and 135 to 157; these read FTCTECGKNFSFTTSFIRHMRIH, YSCADCGKHFSEKMYLQFHQKNP, FTCTECGKCFSLSSYLHRHQRLH, FSCAECGKAFSGKAQLQDHQNTH, and FTCTECGKCFTRKGSLQMHQKIH.

It belongs to the krueppel C2H2-type zinc-finger protein family.

The protein localises to the nucleus. Functionally, may be involved in transcriptional regulation. The protein is Oocyte zinc finger protein XlCOF2 of Xenopus laevis (African clawed frog).